Here is a 288-residue protein sequence, read N- to C-terminus: 30 kDa spicule matrix protein (288 aa).

Residues 1–20 (MRCFVYVLVCVVASVSYSRA) form the signal peptide. A C-type lectin domain is found at 93-163 (ANMYCGQMHP…YTNWEGMVAP (71 aa)). The N-linked (GlcNAc...) asparagine glycan is linked to Asn-103.

As to expression, spines and tube feet.

Matrix protein of the sea urchin embryo spicule. The function of the matrix proteins is to direct crystal growth in certain orientations and inhibit growth in others. The chain is 30 kDa spicule matrix protein (SM30) from Hemicentrotus pulcherrimus (Sea urchin).